A 206-amino-acid polypeptide reads, in one-letter code: Transmembrane 4 L6 family member 19 (206 aa).

At 1–16 (MLSFSRVVNCSRTCSR) the chain is on the cytoplasmic side. A helical transmembrane segment spans residues 17–37 (FLGLSLGTASLCAAGANIALL). The Extracellular portion of the chain corresponds to 38-54 (FPNWDVTYLMRGLIGKH). A helical membrane pass occupies residues 55 to 75 (AMLGSGLWGGGLMVLLAATLI). Topologically, residues 76-89 (SMTGSFSKSAPCLQ) are cytoplasmic. The chain crosses the membrane as a helical span at residues 90–110 (VLIALLSSGLALLGAVICFVT). The Extracellular segment spans residues 111–171 (SGVALKDGPF…PSKAVVWHVA (61 aa)). The N-linked (GlcNAc...) asparagine glycan is linked to N129. The chain crosses the membrane as a helical span at residues 172–192 (FFSILLCISLLQLLLVAIHLV). Positions 182 to 192 (LQLLLVAIHLV) are important for homodimerization. Residues 193–206 (NSILGLFCSFCEKH) lie on the Cytoplasmic side of the membrane.

Belongs to the L6 tetraspanin family. May form homodimers and homooligomers. Interacts with integrins ITGAV and ITGB3. Interacts with components of members of the V0 complex of vacuolar(H+)-ATPase (V-ATPase), including ATP6V0B and ATP6V0D2; this interaction inhibits V1-V0 complex assembly. As to expression, predominantly expressed in osteoclasts (at protein level). Also expressed in white adipose tissue, as well as in bone marrow-derived macrophages.

Its subcellular location is the lysosome membrane. It localises to the cytoplasm. It is found in the cytoskeleton. The protein resides in the cell projection. The protein localises to the filopodium. Its function is as follows. Negatively regulates vacuolar (H+)-ATPase (V-ATPase) activity by interacting with members of V-ATPase V0 complex and hence inhibiting V1-V0 assembly. Required for multinucleation during osteoclast differentiation. In Mus musculus (Mouse), this protein is Transmembrane 4 L6 family member 19 (Tm4sf19).